A 152-amino-acid chain; its full sequence is Interleukin-2 (152 aa).

Residues 1–20 form the signal peptide; that stretch reads MYRMQLLSCIALTLALVANG. Threonine 23 carries an O-linked (GalNAc...) threonine glycan. Cysteine 78 and cysteine 126 form a disulfide bridge.

The protein belongs to the IL-2 family.

It is found in the secreted. Cytokine produced by activated CD4-positive helper T-cells and to a lesser extend activated CD8-positive T-cells and natural killer (NK) cells that plays pivotal roles in the immune response and tolerance. Binds to a receptor complex composed of either the high-affinity trimeric IL-2R (IL2RA/CD25, IL2RB/CD122 and IL2RG/CD132) or the low-affinity dimeric IL-2R (IL2RB and IL2RG). Interaction with the receptor leads to oligomerization and conformation changes in the IL-2R subunits resulting in downstream signaling starting with phosphorylation of JAK1 and JAK3. In turn, JAK1 and JAK3 phosphorylate the receptor to form a docking site leading to the phosphorylation of several substrates including STAT5. This process leads to activation of several pathways including STAT, phosphoinositide-3-kinase/PI3K and mitogen-activated protein kinase/MAPK pathways. Functions as a T-cell growth factor and can increase NK-cell cytolytic activity as well. Promotes strong proliferation of activated B-cells and subsequently immunoglobulin production. Plays a pivotal role in regulating the adaptive immune system by controlling the survival and proliferation of regulatory T-cells, which are required for the maintenance of immune tolerance. Moreover, participates in the differentiation and homeostasis of effector T-cell subsets, including Th1, Th2, Th17 as well as memory CD8-positive T-cells. This is Interleukin-2 (IL2) from Orcinus orca (Killer whale).